Consider the following 364-residue polypeptide: MSVLAAIAVLAVLILVHELGHFVAARSQGIHVNRFSLGFGPVLWKYQGAETEYAIRAFPLGGFVGFPDDDPDSDIPPNDPNLLRNRPILDRAIVISAGVIANLIFAYMLLLAQVGFVGIGQASQPGVSIQQLAPEVSAVATNAGLKPGDVILSANQKEFGTSLQEIEALRDIIKNSPGKSIQLTVARGDERLSVNVIPEAKPAGGSIGIGLAPNGKVERRPVSLSKAFSVGASEFQRIVVMTFKGFGQLVTNFGETASQVAGPIKIVEIGANIAQNDTGSLFFFAALISINLAVINILPLPALDGGQLAFLLIEGLRGKPLPNRIQEGVMQTGLVLLLGLGIFLIVKETTQLTTQLEWVQKLFQ.

His17 is a binding site for Zn(2+). Glu18 is an active-site residue. His21 lines the Zn(2+) pocket. 3 helical membrane-spanning segments follow: residues 92–114 (AIVI…LAQV), 281–303 (LFFF…LPAL), and 329–346 (VMQT…FLIV). In terms of domain architecture, PDZ spans 103–188 (LIFAYMLLLA…KSIQLTVARG (86 aa)).

This sequence belongs to the peptidase M50B family. Requires Zn(2+) as cofactor.

Its subcellular location is the cell inner membrane. This Nostoc sp. (strain PCC 7120 / SAG 25.82 / UTEX 2576) protein is Putative zinc metalloprotease all3971.